We begin with the raw amino-acid sequence, 459 residues long: Argininosuccinate lyase (459 aa).

The protein belongs to the lyase 1 family. Argininosuccinate lyase subfamily.

The protein localises to the cytoplasm. It carries out the reaction 2-(N(omega)-L-arginino)succinate = fumarate + L-arginine. The protein operates within amino-acid biosynthesis; L-arginine biosynthesis; L-arginine from L-ornithine and carbamoyl phosphate: step 3/3. This is Argininosuccinate lyase from Bacillus licheniformis (strain ATCC 14580 / DSM 13 / JCM 2505 / CCUG 7422 / NBRC 12200 / NCIMB 9375 / NCTC 10341 / NRRL NRS-1264 / Gibson 46).